A 215-amino-acid polypeptide reads, in one-letter code: Charged multivesicular body protein 4 (215 aa).

The stretch at 10–173 forms a coiled coil; the sequence is KQDTQETIGK…QEELDAQLLN (164 aa).

Belongs to the SNF7 family. In terms of assembly, probable core component of the endosomal sorting required for transport complex III (ESCRT-III). ESCRT-III components are thought to multimerize to form a flat lattice on the perimeter membrane of the endosome.

The protein localises to the cytoplasmic vesicle membrane. It is found in the late endosome membrane. Probable core component of the endosomal sorting required for transport complex III (ESCRT-III) which is involved in multivesicular bodies (MVBs) formation and sorting of endosomal cargo proteins into MVBs. MVBs contain intraluminal vesicles (ILVs) that are generated by invagination and scission from the limiting membrane of the endosome and mostly are delivered to lysosomes enabling degradation of membrane proteins. The protein is Charged multivesicular body protein 4 (chmp4) of Dictyostelium discoideum (Social amoeba).